Consider the following 365-residue polypeptide: Succinyl-diaminopimelate desuccinylase (365 aa).

A Zn(2+)-binding site is contributed by H64. D66 is a catalytic residue. Residue D95 coordinates Zn(2+). E125 (proton acceptor) is an active-site residue. Zn(2+) contacts are provided by E126, E154, and H339.

Belongs to the peptidase M20A family. DapE subfamily. Homodimer. The cofactor is Zn(2+). It depends on Co(2+) as a cofactor.

The enzyme catalyses N-succinyl-(2S,6S)-2,6-diaminopimelate + H2O = (2S,6S)-2,6-diaminopimelate + succinate. Its pathway is amino-acid biosynthesis; L-lysine biosynthesis via DAP pathway; LL-2,6-diaminopimelate from (S)-tetrahydrodipicolinate (succinylase route): step 3/3. Catalyzes the hydrolysis of N-succinyl-L,L-diaminopimelic acid (SDAP), forming succinate and LL-2,6-diaminopimelate (DAP), an intermediate involved in the bacterial biosynthesis of lysine and meso-diaminopimelic acid, an essential component of bacterial cell walls. The chain is Succinyl-diaminopimelate desuccinylase from Campylobacter fetus subsp. fetus (strain 82-40).